The chain runs to 138 residues: Endoribonuclease YbeY (138 aa).

Zn(2+)-binding residues include histidine 98, histidine 102, and histidine 108.

Belongs to the endoribonuclease YbeY family. It depends on Zn(2+) as a cofactor.

The protein resides in the cytoplasm. Single strand-specific metallo-endoribonuclease involved in late-stage 70S ribosome quality control and in maturation of the 3' terminus of the 16S rRNA. In Thermosipho melanesiensis (strain DSM 12029 / CIP 104789 / BI429), this protein is Endoribonuclease YbeY.